A 200-amino-acid chain; its full sequence is Holliday junction branch migration complex subunit RuvA (200 aa).

The domain I stretch occupies residues 1–63 (MYAYIKGTLT…EDAQLLYGFI (63 aa)). The tract at residues 64-142 (NQEEKDMFLS…INDVDSSQIL (79 aa)) is domain II. The flexible linker stretch occupies residues 143–149 (NTDTQDH). A domain III region spans residues 150–200 (ANAPIIKEALLALEALGYSKRELTKVEKSLSKETFDSVDDAVKRGLQLLIA).

It belongs to the RuvA family. Homotetramer. Forms an RuvA(8)-RuvB(12)-Holliday junction (HJ) complex. HJ DNA is sandwiched between 2 RuvA tetramers; dsDNA enters through RuvA and exits via RuvB. An RuvB hexamer assembles on each DNA strand where it exits the tetramer. Each RuvB hexamer is contacted by two RuvA subunits (via domain III) on 2 adjacent RuvB subunits; this complex drives branch migration. In the full resolvosome a probable DNA-RuvA(4)-RuvB(12)-RuvC(2) complex forms which resolves the HJ.

It is found in the cytoplasm. The RuvA-RuvB-RuvC complex processes Holliday junction (HJ) DNA during genetic recombination and DNA repair, while the RuvA-RuvB complex plays an important role in the rescue of blocked DNA replication forks via replication fork reversal (RFR). RuvA specifically binds to HJ cruciform DNA, conferring on it an open structure. The RuvB hexamer acts as an ATP-dependent pump, pulling dsDNA into and through the RuvAB complex. HJ branch migration allows RuvC to scan DNA until it finds its consensus sequence, where it cleaves and resolves the cruciform DNA. In Staphylococcus saprophyticus subsp. saprophyticus (strain ATCC 15305 / DSM 20229 / NCIMB 8711 / NCTC 7292 / S-41), this protein is Holliday junction branch migration complex subunit RuvA.